The sequence spans 296 residues: 4-hydroxy-tetrahydrodipicolinate synthase (296 aa).

A pyruvate-binding site is contributed by threonine 50. The Proton donor/acceptor role is filled by tyrosine 138. Lysine 166 serves as the catalytic Schiff-base intermediate with substrate. Residue isoleucine 208 participates in pyruvate binding.

This sequence belongs to the DapA family. Homotetramer; dimer of dimers.

It localises to the cytoplasm. The enzyme catalyses L-aspartate 4-semialdehyde + pyruvate = (2S,4S)-4-hydroxy-2,3,4,5-tetrahydrodipicolinate + H2O + H(+). It participates in amino-acid biosynthesis; L-lysine biosynthesis via DAP pathway; (S)-tetrahydrodipicolinate from L-aspartate: step 3/4. Catalyzes the condensation of (S)-aspartate-beta-semialdehyde [(S)-ASA] and pyruvate to 4-hydroxy-tetrahydrodipicolinate (HTPA). The chain is 4-hydroxy-tetrahydrodipicolinate synthase from Ruthia magnifica subsp. Calyptogena magnifica.